Consider the following 302-residue polypeptide: Homoserine kinase (302 aa).

90–100 contributes to the ATP binding site; it reads KPGSGLGSSSA.

The protein belongs to the GHMP kinase family. Homoserine kinase subfamily.

Its subcellular location is the cytoplasm. The catalysed reaction is L-homoserine + ATP = O-phospho-L-homoserine + ADP + H(+). The protein operates within amino-acid biosynthesis; L-threonine biosynthesis; L-threonine from L-aspartate: step 4/5. Its function is as follows. Catalyzes the ATP-dependent phosphorylation of L-homoserine to L-homoserine phosphate. This Methanococcus vannielii (strain ATCC 35089 / DSM 1224 / JCM 13029 / OCM 148 / SB) protein is Homoserine kinase.